The chain runs to 122 residues: Small ribosomal subunit protein uS13 (122 aa).

The tract at residues 92–122 (HRRGLPVRGQRTHTNARTRKGPAKPIAGKKK) is disordered.

The protein belongs to the universal ribosomal protein uS13 family. Part of the 30S ribosomal subunit. Forms a loose heterodimer with protein S19. Forms two bridges to the 50S subunit in the 70S ribosome.

In terms of biological role, located at the top of the head of the 30S subunit, it contacts several helices of the 16S rRNA. In the 70S ribosome it contacts the 23S rRNA (bridge B1a) and protein L5 of the 50S subunit (bridge B1b), connecting the 2 subunits; these bridges are implicated in subunit movement. Contacts the tRNAs in the A and P-sites. The sequence is that of Small ribosomal subunit protein uS13 from Paracoccus denitrificans (strain Pd 1222).